The primary structure comprises 459 residues: tRNA(Ile)-lysidine synthase (459 aa).

38–43 lines the ATP pocket; it reads SGGMDS.

Belongs to the tRNA(Ile)-lysidine synthase family.

The protein localises to the cytoplasm. It catalyses the reaction cytidine(34) in tRNA(Ile2) + L-lysine + ATP = lysidine(34) in tRNA(Ile2) + AMP + diphosphate + H(+). Its function is as follows. Ligates lysine onto the cytidine present at position 34 of the AUA codon-specific tRNA(Ile) that contains the anticodon CAU, in an ATP-dependent manner. Cytidine is converted to lysidine, thus changing the amino acid specificity of the tRNA from methionine to isoleucine. The protein is tRNA(Ile)-lysidine synthase of Acinetobacter baylyi (strain ATCC 33305 / BD413 / ADP1).